The chain runs to 125 residues: Large ribosomal subunit protein bL17 (125 aa).

This sequence belongs to the bacterial ribosomal protein bL17 family. As to quaternary structure, part of the 50S ribosomal subunit. Contacts protein L32.

The polypeptide is Large ribosomal subunit protein bL17 (Blochmanniella floridana).